Reading from the N-terminus, the 298-residue chain is GTPase Era (298 aa).

In terms of domain architecture, Era-type G spans 3 to 170 (KSGFVAILGR…IKLLTDNLEE (168 aa)). The segment at 11-18 (GRPNVGKS) is G1. 11-18 (GRPNVGKS) contacts GTP. Residues 37–41 (QTTRN) form a G2 region. Residues 58 to 61 (DTPG) form a G3 region. GTP-binding positions include 58-62 (DTPGI) and 120-123 (NKID). Residues 120–123 (NKID) form a G4 region. The interval 149 to 151 (ISA) is G5. Residues 201 to 279 (TQQEVPHSVA…YLETWVKVKK (79 aa)) form the KH type-2 domain.

The protein belongs to the TRAFAC class TrmE-Era-EngA-EngB-Septin-like GTPase superfamily. Era GTPase family. In terms of assembly, monomer.

The protein localises to the cytoplasm. The protein resides in the cell membrane. An essential GTPase that binds both GDP and GTP, with rapid nucleotide exchange. Plays a role in 16S rRNA processing and 30S ribosomal subunit biogenesis and possibly also in cell cycle regulation and energy metabolism. The polypeptide is GTPase Era (Streptococcus pyogenes serotype M2 (strain MGAS10270)).